The chain runs to 329 residues: Prostaglandin reductase 1 (329 aa).

A Phosphothreonine modification is found at Thr-18. Ser-20 carries the phosphoserine modification. Residues 152–155, Lys-178, Tyr-193, Asn-217, 239–245, 270–272, and Asn-321 each bind NADP(+); these read GAVG, CGAISVY, and FIV. Residue Lys-178 is modified to N6-(2-hydroxyisobutyryl)lysine; alternate. Lys-178 carries the N6-acetyllysine; alternate modification.

This sequence belongs to the NADP-dependent oxidoreductase L4BD family. Monomer or homodimer. Detected in small intestine, kidney, liver, spleen and stomach (at protein level). Detected in small intestine, kidney and liver.

It localises to the cytoplasm. It catalyses the reaction 13,14-dihydro-15-oxo-prostaglandin E1 + NADP(+) = 15-oxoprostaglandin E1 + NADPH + H(+). The catalysed reaction is 13,14-dihydro-15-oxo-prostaglandin E2 + NAD(+) = 15-oxoprostaglandin E2 + NADH + H(+). It carries out the reaction 13,14-dihydro-15-oxo-prostaglandin F1alpha + NADP(+) = 15-oxoprostaglandin F1alpha + NADPH + H(+). The enzyme catalyses 13,14-dihydro-15-oxo-PGF2alpha + NADP(+) = 15-oxoprostaglandin F2alpha + NADPH + H(+). It catalyses the reaction leukotriene B4 + NADP(+) = 12-oxo-leukotriene B4 + NADPH + H(+). The catalysed reaction is 20-hydroxy-leukotriene B4 + NADP(+) = 12-oxo-20-hydroxy-leukotriene B4 + NADPH + H(+). It carries out the reaction 6-trans-leukotriene B4 + NADP(+) = 12-oxo-(5S)-hydroxy-(6E,8E,10E,14Z)-eicosatetraenoate + NADPH + H(+). The enzyme catalyses (5S,12S)-dihydroxy-(6E,10E,12E,14Z)-eicosatetraenoate + NADP(+) = 12-oxo-(5S)-hydroxy-(6E,8E,10E,14Z)-eicosatetraenoate + NADPH + H(+). It catalyses the reaction an n-alkanal + NADP(+) = an alk-2-enal + NADPH + H(+). The catalysed reaction is hexanal + NADP(+) = (E)-hex-2-enal + NADPH + H(+). It carries out the reaction octanal + NADP(+) = (2E)-octenal + NADPH + H(+). The enzyme catalyses decanal + NADP(+) = (2E)-decenal + NADPH + H(+). It catalyses the reaction dodecanal + NADP(+) = (2E)-dodecenal + NADPH + H(+). The catalysed reaction is 4-hydroxynonanal + NADP(+) = (E)-4-hydroxynon-2-enal + NADPH + H(+). It carries out the reaction pentan-2-one + NADP(+) = (E)-pent-3-en-2-one + NADPH + H(+). The enzyme catalyses nonan-2-one + NADP(+) = (3E)-nonen-2-one + NADPH + H(+). Functionally, NAD(P)H-dependent oxidoreductase involved in metabolic inactivation of pro- and anti-inflammatory eicosanoids: prostaglandins (PG), leukotrienes (LT) and lipoxins (LX). Catalyzes with high efficiency the reduction of the 13,14 double bond of 15-oxoPGs, including 15-oxo-PGE1, 15-oxo-PGE2, 15-oxo-PGF1-alpha and 15-oxo-PGF2-alpha. Catalyzes with lower efficiency the oxidation of the hydroxyl group at C12 of LTB4 and its derivatives, converting them into biologically less active 12-oxo-LTB4 metabolites. Reduces 15-oxo-LXA4 to 13,14 dihydro-15-oxo-LXA4, enhancing neutrophil recruitment at the inflammatory site. Plays a role in metabolic detoxification of alkenals and ketones. Reduces alpha,beta-unsaturated alkenals and ketones, particularly those with medium-chain length, showing highest affinity toward (2E)-decenal and (3E)-3-nonen-2-one. May inactivate 4-hydroxy-2-nonenal, a cytotoxic lipid constituent of oxidized low-density lipoprotein particles. The polypeptide is Prostaglandin reductase 1 (Ptgr1) (Cavia porcellus (Guinea pig)).